Here is a 288-residue protein sequence, read N- to C-terminus: NAD kinase (288 aa).

Asp70 acts as the Proton acceptor in catalysis. Residues 70–71 (DG), 144–145 (ND), Arg155, Lys172, Asp174, 185–190 (TGYSLS), and Gln245 contribute to the NAD(+) site.

The protein belongs to the NAD kinase family. A divalent metal cation is required as a cofactor.

Its subcellular location is the cytoplasm. It catalyses the reaction NAD(+) + ATP = ADP + NADP(+) + H(+). In terms of biological role, involved in the regulation of the intracellular balance of NAD and NADP, and is a key enzyme in the biosynthesis of NADP. Catalyzes specifically the phosphorylation on 2'-hydroxyl of the adenosine moiety of NAD to yield NADP. The sequence is that of NAD kinase from Geobacter sp. (strain M21).